The primary structure comprises 333 residues: MSNVVVCALYKFVSLPHFESLREPLLSMMEQAEIKGTLLLASEGINGTVAGTQAAIDALLAWLNNQNGLENIVYKLSFDDEMPFYRTKVKLKKEIVTMGVEGIDPLKVVGTYVKPQDWNALISDPEVILVDTRNDYEVQIGTFKNAINPVTETFREFPDYVKQNLDPAKHKKVAMFCTGGIRCEKSTAYLKEQGFEEVYHLEGGILKYLEEIKQEESLWEGECFVFDNRVAVDHDLKKGQYDQCNACRMPITEAEKLSLAYVQGVSCPHCIDKISEEQRKRFVERERQVNLAKSRNEAHIGSDVNQVIEARRQKKEALRQQSVEKNKAKQANV.

A Rhodanese domain is found at 123 to 217 (SDPEVILVDT…YLEEIKQEES (95 aa)). The active-site Cysteine persulfide intermediate is cysteine 177.

Belongs to the TrhO family.

The catalysed reaction is uridine(34) in tRNA + AH2 + O2 = 5-hydroxyuridine(34) in tRNA + A + H2O. Functionally, catalyzes oxygen-dependent 5-hydroxyuridine (ho5U) modification at position 34 in tRNAs. This chain is tRNA uridine(34) hydroxylase, found in Shewanella sp. (strain MR-7).